The chain runs to 101 residues: Class II hydrophobin 5 (101 aa).

An N-terminal signal peptide occupies residues 1-15 (MQLTALLALATLAIA). Disulfide bonds link C33–C83, C44–C74, C45–C57, and C84–C95.

The protein belongs to the cerato-ulmin hydrophobin family. Homodimer. Homodimers further self-assemble to form highly ordered films at water-air interfaces through intermolecular interactions.

The protein localises to the secreted. It is found in the cell wall. In terms of biological role, aerial growth, conidiation, and dispersal of filamentous fungi in the environment rely upon a capability of their secreting small amphipathic proteins called hydrophobins (HPBs) with low sequence identity. Class I can self-assemble into an outermost layer of rodlet bundles on aerial cell surfaces, conferring cellular hydrophobicity that supports fungal growth, development and dispersal; whereas Class II form highly ordered films at water-air interfaces through intermolecular interactions but contribute nothing to the rodlet structure. This is Class II hydrophobin 5 from Trichoderma asperellum (strain ATCC 204424 / CBS 433.97 / NBRC 101777).